A 742-amino-acid polypeptide reads, in one-letter code: Phosphatidylinositol 4-phosphate 5-kinase its3 (742 aa).

2 disordered regions span residues 1 to 21 (MKID…IPSY) and 82 to 228 (LFKE…PDIG). 2 stretches are compositionally biased toward low complexity: residues 90–105 (PSNP…SNDS) and 129–142 (PSSN…LQNL). Polar residues-rich tracts occupy residues 158–181 (RSSS…SSSQ) and 193–218 (EKNS…TSGS). One can recognise a PIPK domain in the interval 264-662 (GHENYVTAYN…RFYKFVESSI (399 aa)). The disordered stretch occupies residues 677 to 742 (QDGQRVNKQQ…RNVTTNTSSS (66 aa)). Polar residues predominate over residues 680–719 (QRVNKQQSVNAGNVRTNNKHGSLNNNTAPSSRNAKSTSAH).

As to quaternary structure, interacts with opy1 (via domain PH 1); the interaction is direct but opy1 does not appear to regulate its3 localization or function. Post-translationally, phosphorylated by casein kinase I. Phosphorylation inactivates the enzyme.

Its subcellular location is the cell membrane. The catalysed reaction is a 1,2-diacyl-sn-glycero-3-phospho-(1D-myo-inositol 4-phosphate) + ATP = a 1,2-diacyl-sn-glycero-3-phospho-(1D-myo-inositol-4,5-bisphosphate) + ADP + H(+). Catalyzes the phosphorylation of phosphatidylinositol 4-phosphate on the fifth hydroxyl of the myo-inositol ring, to form phosphatidylinositol 4,5-bisphosphate. Involved, together with the calcineurin ppb1, in cytokinesis. The polypeptide is Phosphatidylinositol 4-phosphate 5-kinase its3 (its3) (Schizosaccharomyces pombe (strain 972 / ATCC 24843) (Fission yeast)).